We begin with the raw amino-acid sequence, 491 residues long: Glutamyl-tRNA(Gln) amidotransferase subunit A (491 aa).

Active-site charge relay system residues include Lys-76 and Ser-154. The active-site Acyl-ester intermediate is Ser-178.

The protein belongs to the amidase family. GatA subfamily. In terms of assembly, heterotrimer of A, B and C subunits.

It catalyses the reaction L-glutamyl-tRNA(Gln) + L-glutamine + ATP + H2O = L-glutaminyl-tRNA(Gln) + L-glutamate + ADP + phosphate + H(+). Allows the formation of correctly charged Gln-tRNA(Gln) through the transamidation of misacylated Glu-tRNA(Gln) in organisms which lack glutaminyl-tRNA synthetase. The reaction takes place in the presence of glutamine and ATP through an activated gamma-phospho-Glu-tRNA(Gln). The protein is Glutamyl-tRNA(Gln) amidotransferase subunit A of Cereibacter sphaeroides (strain ATCC 17025 / ATH 2.4.3) (Rhodobacter sphaeroides).